The chain runs to 491 residues: Cytochrome P450 2F5 (491 aa).

A heme-binding site is contributed by cysteine 436.

It belongs to the cytochrome P450 family. Requires heme as cofactor.

It is found in the endoplasmic reticulum membrane. The protein resides in the microsome membrane. It catalyses the reaction an organic molecule + reduced [NADPH--hemoprotein reductase] + O2 = an alcohol + oxidized [NADPH--hemoprotein reductase] + H2O + H(+). Functionally, cytochromes P450 are a group of heme-thiolate monooxygenases. In liver microsomes, this enzyme is involved in an NADPH-dependent electron transport pathway. It oxidizes a variety of structurally unrelated compounds, including steroids, fatty acids, and xenobiotics. This Gorilla gorilla gorilla (Western lowland gorilla) protein is Cytochrome P450 2F5 (CYP2F5).